A 718-amino-acid chain; its full sequence is ATP-dependent RNA helicase homolog DQX1 (718 aa).

The 169-residue stretch at 54-222 (HLESSPTGVV…WGNSPIVRVP (169 aa)) folds into the Helicase ATP-binding domain. An ATP-binding site is contributed by 67–74 (GDPGSGKS). Positions 167 to 170 (DEAQ) match the DEAQ box motif. In terms of domain architecture, Helicase C-terminal spans 245–447 (ACQAVLELCQ…ALMRALEDLD (203 aa)). The interval 690-718 (QLREGTAEPPAAATETSSPQEYGDGCVLQ) is disordered. The segment covering 696 to 708 (AEPPAAATETSSP) has biased composition (low complexity).

Ubiquitous.

The protein localises to the nucleus. Functionally, might be involved in RNA metabolism; it is missing helicase motif III and may not have helicase activity. In Mus musculus (Mouse), this protein is ATP-dependent RNA helicase homolog DQX1 (Dqx1).